The chain runs to 193 residues: Large ribosomal subunit protein uL18 (193 aa).

The protein belongs to the universal ribosomal protein uL18 family. As to quaternary structure, part of the 50S ribosomal subunit. Contacts the 5S and 23S rRNAs.

Its function is as follows. This is one of the proteins that bind and probably mediate the attachment of the 5S RNA into the large ribosomal subunit, where it forms part of the central protuberance. The polypeptide is Large ribosomal subunit protein uL18 (Methanococcus maripaludis (strain DSM 14266 / JCM 13030 / NBRC 101832 / S2 / LL)).